The chain runs to 448 residues: MNTILPSDPARDDVLAGRPTLWLNPSYRKQAIDTSDLPVSPADVASARQNWQRLAPLLAECFPELKDTGGDIRSELVELKELREALGYRTREFGNVFIKADSHLPVAGSIKARGGVYEVFLFADSLARQKGVLVDGEDIRKLATEEARSLFSGYTVAVGSTGNLGLSVGIAARALGFKATVHMSSDAKAWKVERLRKLGVDVIQHEADYTTAVENARDIADADPTIYFVDDEQSRHLFLGYSAAASELASQLDERGITIDEENPLFLYLPCGIGGAPGGVAFGAKAIFGDNVHAFFVEPVQSPCALVHMMSGKQELVSVYDVGLTNKTEADGMAVARMSAFVAKVMREMLAGVYTAADDDLFKLLRMAWITQRQKLEPSAAAALLGPDFLLRHKEGRRFQTLNVIEEKMSQATHVLWTTGGSFVPEEQFQHFLDQAESIAAPSDRNDE.

Residue Lys-111 is modified to N6-(pyridoxal phosphate)lysine.

It belongs to the serine/threonine dehydratase family. DsdA subfamily. Requires pyridoxal 5'-phosphate as cofactor.

The enzyme catalyses D-serine = pyruvate + NH4(+). The chain is Probable D-serine dehydratase from Rhizobium etli (strain CIAT 652).